The chain runs to 428 residues: Dihydroorotase (428 aa).

Zn(2+)-binding residues include His60 and His62. Residues His62 to Arg64 and Asn94 each bind substrate. Residues Asp152, His179, and His232 each contribute to the Zn(2+) site. Asn278 serves as a coordination point for substrate. Asp305 serves as a coordination point for Zn(2+). Residue Asp305 is part of the active site. His309 provides a ligand contact to substrate.

The protein belongs to the metallo-dependent hydrolases superfamily. DHOase family. Class I DHOase subfamily. Zn(2+) is required as a cofactor.

It catalyses the reaction (S)-dihydroorotate + H2O = N-carbamoyl-L-aspartate + H(+). Its pathway is pyrimidine metabolism; UMP biosynthesis via de novo pathway; (S)-dihydroorotate from bicarbonate: step 3/3. Its function is as follows. Catalyzes the reversible cyclization of carbamoyl aspartate to dihydroorotate. The sequence is that of Dihydroorotase from Ruminiclostridium cellulolyticum (strain ATCC 35319 / DSM 5812 / JCM 6584 / H10) (Clostridium cellulolyticum).